The chain runs to 137 residues: L-ectoine synthase (137 aa).

The tract at residues 115-137 (EVHDESGAYPADPELAREPVAAD) is disordered.

This sequence belongs to the ectoine synthase family.

It catalyses the reaction (2S)-4-acetamido-2-aminobutanoate = L-ectoine + H2O. It participates in amine and polyamine biosynthesis; ectoine biosynthesis; L-ectoine from L-aspartate 4-semialdehyde: step 3/3. Its function is as follows. Catalyzes the circularization of gamma-N-acetyl-alpha,gamma-diaminobutyric acid (ADABA) to ectoine (1,4,5,6-tetrahydro-2-methyl-4-pyrimidine carboxylic acid), which is an excellent osmoprotectant. The sequence is that of L-ectoine synthase from Sphingopyxis alaskensis (strain DSM 13593 / LMG 18877 / RB2256) (Sphingomonas alaskensis).